The primary structure comprises 750 residues: ABC transporter D family member 3 (750 aa).

Over residues 1–14 the composition is skewed to polar residues; sequence MKKNNVNNITETLN. The interval 1-32 is disordered; sequence MKKNNVNNITETLNSSSSSSSSSGSSSDEEVK. Positions 15-26 are enriched in low complexity; the sequence is SSSSSSSSSGSS. 4 helical membrane passes run 63-83, 123-143, 188-208, and 215-235; these read IVIILYEKPVIPLLLFLLLFG, FAIGGSALFDAIIKFIVSIMA, FTTLLSSIVSQCITGPMVVVY, and TTIDWYAPLIVYGYFFLGYFI. The 289-residue stretch at 74-362 folds into the ABC transmembrane type-1 domain; that stretch reads PLLLFLLLFG…EQAKQQFEAL (289 aa). The stretch at 334–370 forms a coiled coil; the sequence is ALLKRSNKNIKNEELLVEEEQAKQQFEALLKNKKRVI. A helical membrane pass occupies residues 382–402; that stretch reads MFTFFSPLINYFIISIPVFFL. An ABC transporter domain is found at 507-737; that stretch reads ITLDDVTYFT…SNNINTINID (231 aa). 540-547 provides a ligand contact to ATP; sequence GPSGSGKS.

Belongs to the ABC transporter superfamily. ABCD family. Peroxisomal fatty acyl CoA transporter (TC 3.A.1.203) subfamily.

It localises to the membrane. The polypeptide is ABC transporter D family member 3 (abcD3) (Dictyostelium discoideum (Social amoeba)).